A 23-amino-acid polypeptide reads, in one-letter code: Testis ecdysiotropin peptide B (23 aa).

Stimulates synthesis of ecdysteroid in the testes of larvae and pupae. The sequence is that of Testis ecdysiotropin peptide B from Lymantria dispar (Gypsy moth).